The primary structure comprises 110 residues: UPF0102 protein Abu_0255 (110 aa).

The protein belongs to the UPF0102 family.

The polypeptide is UPF0102 protein Abu_0255 (Aliarcobacter butzleri (strain RM4018) (Arcobacter butzleri)).